The chain runs to 580 residues: Arginine--tRNA ligase (580 aa).

A 'HIGH' region motif is present at residues 127–137 (PNLAKEMHVGH).

This sequence belongs to the class-I aminoacyl-tRNA synthetase family. Monomer.

The protein localises to the cytoplasm. It carries out the reaction tRNA(Arg) + L-arginine + ATP = L-arginyl-tRNA(Arg) + AMP + diphosphate. This Idiomarina loihiensis (strain ATCC BAA-735 / DSM 15497 / L2-TR) protein is Arginine--tRNA ligase.